The sequence spans 109 residues: Parvalbumin beta-1 (109 aa).

Residue serine 2 is modified to N-acetylserine. EF-hand domains are found at residues 39–74 (KSHE…FGAG) and 78–109 (LTAA…LVKA). Ca(2+)-binding residues include aspartate 52, aspartate 54, serine 56, phenylalanine 58, glutamate 60, glutamate 63, aspartate 91, aspartate 93, aspartate 95, methionine 97, and glutamate 102.

It belongs to the parvalbumin family.

In muscle, parvalbumin is thought to be involved in relaxation after contraction. It binds two calcium ions. The protein is Parvalbumin beta-1 of Gadus chalcogrammus (Alaska pollock).